Reading from the N-terminus, the 55-residue chain is Large ribosomal subunit protein bL33 (55 aa).

It belongs to the bacterial ribosomal protein bL33 family.

This chain is Large ribosomal subunit protein bL33, found in Leifsonia xyli subsp. xyli (strain CTCB07).